The following is a 388-amino-acid chain: MGRVGVLLLNLGGPDKLEDVGPFLFNLFSDPEIIRLPFRWLQKPLAWFIASRRTKTSQENYKQIGGGSPLRRITEAQGEALKEQLHDLGQEANIYVGMRYWHPYTEEAIALLTQDNLDNLVILPLYPQFSISTSGSSFRLLERLWQEDPKLQRLDYTVIPSWYKEPCYLQAMAELISQEVDQFPDPDQVHVFFSAHGVPKSYVEEAGDPYQQEIEECTALIMQTLNRPNPHTLAYQSRVGPVEWLQPYTEDALKELGAQGVKDLVVVPISFVSEHIETLQEIDIEYREIAEEAGIHNFRRVAAPNTHPVFIRALANLVIDALNKPSFKLSQAAQIKKMVKMYPPESWEWGMTSSAEVWNGRIAMLGFIALIIELVTGQGLLHMIGLLQ.

Fe cation contacts are provided by His-196 and Glu-277.

Belongs to the ferrochelatase family.

The protein resides in the cytoplasm. The enzyme catalyses heme b + 2 H(+) = protoporphyrin IX + Fe(2+). It participates in porphyrin-containing compound metabolism; protoheme biosynthesis; protoheme from protoporphyrin-IX: step 1/1. In terms of biological role, catalyzes the ferrous insertion into protoporphyrin IX. The sequence is that of Ferrochelatase from Trichormus variabilis (strain ATCC 29413 / PCC 7937) (Anabaena variabilis).